The sequence spans 251 residues: CDP-diacylglycerol pyrophosphatase (251 aa).

A helical transmembrane segment spans residues 4 to 24; sequence AGLLFLVMIVIAVVAAGIGYW.

It belongs to the Cdh family.

It localises to the cell inner membrane. The enzyme catalyses a CDP-1,2-diacyl-sn-glycerol + H2O = a 1,2-diacyl-sn-glycero-3-phosphate + CMP + 2 H(+). The protein operates within phospholipid metabolism; CDP-diacylglycerol degradation; phosphatidate from CDP-diacylglycerol: step 1/1. The sequence is that of CDP-diacylglycerol pyrophosphatase from Escherichia coli O81 (strain ED1a).